The primary structure comprises 247 residues: Carboxy-S-adenosyl-L-methionine synthase (247 aa).

Residues Tyr40, 65-67 (GSS), 90-91 (DN), 122-123 (DI), Asn137, and Arg204 each bind S-adenosyl-L-methionine.

It belongs to the class I-like SAM-binding methyltransferase superfamily. Cx-SAM synthase family. In terms of assembly, homodimer.

It carries out the reaction prephenate + S-adenosyl-L-methionine = carboxy-S-adenosyl-L-methionine + 3-phenylpyruvate + H2O. Catalyzes the conversion of S-adenosyl-L-methionine (SAM) to carboxy-S-adenosyl-L-methionine (Cx-SAM). This is Carboxy-S-adenosyl-L-methionine synthase from Pseudomonas fluorescens (strain ATCC BAA-477 / NRRL B-23932 / Pf-5).